Reading from the N-terminus, the 161-residue chain is Effector CFEM5 (161 aa).

Positions 1–23 (MFSLTKSVLFTSIVAIAAQATTA) are cleaved as a signal peptide. A CFEM domain is found at 24–126 (VSSPTQTSLP…KVLDAVVASA (103 aa)). 3 disulfides stabilise this stretch: Cys-46–Cys-78, Cys-56–Cys-63, and Cys-65–Cys-100. Asp-60 is a heme binding site.

It belongs to the RBT5 family. As to quaternary structure, interacts with Z.mays LRR5; the interaction is direct. Interacts with Z.mays WAK17 isoform 2; the interaction is direct.

It is found in the membrane. It localises to the secreted. Functionally, suppresses host programmed cell death during infection by binding to Z.mays WAK17 isoform 2 and Z.mays LRR5, to prevent activation of Z.mays WAK17 isoform 1 and the downstream hypersensitive response. The sequence is that of Effector CFEM5 from Gibberella zeae (strain ATCC MYA-4620 / CBS 123657 / FGSC 9075 / NRRL 31084 / PH-1) (Wheat head blight fungus).